A 111-amino-acid chain; its full sequence is UPF0145 protein BRADO6695 (111 aa).

This sequence belongs to the UPF0145 family.

The polypeptide is UPF0145 protein BRADO6695 (Bradyrhizobium sp. (strain ORS 278)).